A 130-amino-acid chain; its full sequence is Ribosome-binding factor A (130 aa).

It belongs to the RbfA family. In terms of assembly, monomer. Binds 30S ribosomal subunits, but not 50S ribosomal subunits or 70S ribosomes.

Its subcellular location is the cytoplasm. In terms of biological role, one of several proteins that assist in the late maturation steps of the functional core of the 30S ribosomal subunit. Associates with free 30S ribosomal subunits (but not with 30S subunits that are part of 70S ribosomes or polysomes). Required for efficient processing of 16S rRNA. May interact with the 5'-terminal helix region of 16S rRNA. The protein is Ribosome-binding factor A of Flavobacterium johnsoniae (strain ATCC 17061 / DSM 2064 / JCM 8514 / BCRC 14874 / CCUG 350202 / NBRC 14942 / NCIMB 11054 / UW101) (Cytophaga johnsonae).